The primary structure comprises 73 residues: Large ribosomal subunit protein uL30 (73 aa).

It belongs to the universal ribosomal protein uL30 family. In terms of assembly, part of the 50S ribosomal subunit.

This chain is Large ribosomal subunit protein uL30, found in Borrelia hermsii (strain HS1 / DAH).